The sequence spans 451 residues: Chromosomal replication initiator protein DnaA (451 aa).

The domain I, interacts with DnaA modulators stretch occupies residues 1 to 73 (MQDNLPQIWE…SNALKQTTSK (73 aa)). Positions 73 to 113 (KNFEIRFIVPSEEKISKTEESQKKLEGSVNISVASDQFVSN) are domain II. The segment at 114–330 (NLNPKYTFDT…GALIRIVAYS (217 aa)) is domain III, AAA+ region. Positions 158, 160, 161, and 162 each coordinate ATP. The interval 331 to 451 (SLTNSEITVE…ERIAKEIKGD (121 aa)) is domain IV, binds dsDNA.

This sequence belongs to the DnaA family. As to quaternary structure, oligomerizes as a right-handed, spiral filament on DNA at oriC.

Its subcellular location is the cytoplasm. Plays an essential role in the initiation and regulation of chromosomal replication. ATP-DnaA binds to the origin of replication (oriC) to initiate formation of the DNA replication initiation complex once per cell cycle. Binds the DnaA box (a 9 base pair repeat at the origin) and separates the double-stranded (ds)DNA. Forms a right-handed helical filament on oriC DNA; dsDNA binds to the exterior of the filament while single-stranded (ss)DNA is stabiized in the filament's interior. The ATP-DnaA-oriC complex binds and stabilizes one strand of the AT-rich DNA unwinding element (DUE), permitting loading of DNA polymerase. After initiation quickly degrades to an ADP-DnaA complex that is not apt for DNA replication. Binds acidic phospholipids. In Alkaliphilus oremlandii (strain OhILAs) (Clostridium oremlandii (strain OhILAs)), this protein is Chromosomal replication initiator protein DnaA.